Reading from the N-terminus, the 475-residue chain is DnaB-like replicative helicase (475 aa).

The 280-residue stretch at 165-444 folds into the SF4 helicase domain; it reads YMNKARKVPF…STPTEVNEVA (280 aa). 197–204 is a binding site for ATP; sequence AGVNVGKS. Positions 456–475 are interaction with the helicase assembly factor; sequence YQRNESTRAQLDALANELKF.

Belongs to the helicase family. DnaB subfamily. As to quaternary structure, homohexamer. The homohexamer is a trimer of asymmetric dimers. Interacts with the DNA primase; this interaction forms the active primosome complex, which is composed of 6 helicase and 1 primase subunits and expresses full helicase and primase activities. Interacts (via C-terminus) with the helicase assembly factor; this interaction brings about the rapid assembly of the helicase onto ssDNA. Part of the replicase complex that includes the DNA polymerase, the polymerase clamp, the clamp loader complex, the single-stranded DNA binding protein, the primase, the DnaB-like replicative helicase and the helicase assembly factor.

In terms of biological role, ATP-dependent DNA helicase essential for viral DNA replication and recombination. The helicase moves 5' -&gt; 3' on the lagging strand template, unwinding the DNA duplex ahead of the leading strand polymerase at the replication fork and generating ssDNA for both leading and lagging strand synthesis. Interaction with the primase allows the primase to initiate lagging strand synthesis and fully activates the helicase. Loaded by the helicase assembly factor on replication forks that begin at discrete replication origin sequences, as well as on forks that are created during recombination. The protein is DnaB-like replicative helicase of Escherichia coli (Bacteriophage T4).